A 602-amino-acid chain; its full sequence is MTDAPLSRIRNFCIIAHIDHGKSTLADRLLQDTGTVAARDMQEQFLDNMELERERGITIKLQAARMEHIANDGEAYILNLIDTPGHVDFSYEVSRSLQACEGALLVVDASQGVEAQTLANVYLALEQNLEIIPVLNKIDLPGADPERVRQEIEAIIGLDTSKAITCSAKTGIGISEILQAIVERIPPPVDAIEEPLKALIFDSYYDPYRGVIVYFRVMSGQIKTRDKILLMASKKNYELDEVGIMIPGERKVDSLHAGEVGYLAASIKSVADARVGDTITLANNPANNALPGYTEVKPVVFCGLFPTDADQYPDLREALARLQLSDAALKYEPETSSAMGFGFRCGFLGLLHMEIVQERLEREYDLDLIVTAPSVVYKVNMIDESTVMVDNPATLPGPQKRKSIEEPYVKLEIYTPNSYNGTLMELCQERRGEFIDMKYLTTDRVTLHYELPLAEVVTDFFDQMKSRTKGYASMEYNLIGYRPNDLVCLDILINNEKADPLTTIVHRDKAYNVAKGLVEKLKELIPRQQFKIPLQASIGSRVIASESISAIRKDVLAKCYGGDISRKKKLLQKQAKGKKRMKAMGKVDVPQEAFMAVLTLNK.

Positions S7–V189 constitute a tr-type G domain. GTP-binding positions include A16–S23, D82–H86, and N136–D139.

It belongs to the TRAFAC class translation factor GTPase superfamily. Classic translation factor GTPase family. LepA subfamily.

Its subcellular location is the plastid. It localises to the organellar chromatophore. The catalysed reaction is GTP + H2O = GDP + phosphate + H(+). Functionally, promotes protein synthesis. May act as a fidelity factor of the translation reaction, by catalyzing a one-codon backward translocation of tRNAs on improperly translocated ribosomes. This Paulinella chromatophora protein is Translation factor GUF1 homolog, organellar chromatophore.